Reading from the N-terminus, the 291-residue chain is Phosphatidylserine decarboxylase proenzyme (291 aa).

Active-site charge relay system; for autoendoproteolytic cleavage activity residues include Asp-93, His-150, and Ser-253. Ser-253 serves as the catalytic Schiff-base intermediate with substrate; via pyruvic acid; for decarboxylase activity. The residue at position 253 (Ser-253) is a Pyruvic acid (Ser); by autocatalysis.

This sequence belongs to the phosphatidylserine decarboxylase family. PSD-B subfamily. Prokaryotic type I sub-subfamily. Heterodimer of a large membrane-associated beta subunit and a small pyruvoyl-containing alpha subunit. Requires pyruvate as cofactor. Post-translationally, is synthesized initially as an inactive proenzyme. Formation of the active enzyme involves a self-maturation process in which the active site pyruvoyl group is generated from an internal serine residue via an autocatalytic post-translational modification. Two non-identical subunits are generated from the proenzyme in this reaction, and the pyruvate is formed at the N-terminus of the alpha chain, which is derived from the carboxyl end of the proenzyme. The autoendoproteolytic cleavage occurs by a canonical serine protease mechanism, in which the side chain hydroxyl group of the serine supplies its oxygen atom to form the C-terminus of the beta chain, while the remainder of the serine residue undergoes an oxidative deamination to produce ammonia and the pyruvoyl prosthetic group on the alpha chain. During this reaction, the Ser that is part of the protease active site of the proenzyme becomes the pyruvoyl prosthetic group, which constitutes an essential element of the active site of the mature decarboxylase.

The protein localises to the cell membrane. It carries out the reaction a 1,2-diacyl-sn-glycero-3-phospho-L-serine + H(+) = a 1,2-diacyl-sn-glycero-3-phosphoethanolamine + CO2. The protein operates within phospholipid metabolism; phosphatidylethanolamine biosynthesis; phosphatidylethanolamine from CDP-diacylglycerol: step 2/2. Its function is as follows. Catalyzes the formation of phosphatidylethanolamine (PtdEtn) from phosphatidylserine (PtdSer). The polypeptide is Phosphatidylserine decarboxylase proenzyme (Alcanivorax borkumensis (strain ATCC 700651 / DSM 11573 / NCIMB 13689 / SK2)).